The primary structure comprises 367 residues: MYAAVKPLSKYLQFKSVHIYDAIFTLHSKVTVALLLACTFLLSSKQYFGDPIQCFGDKDMDYVHAFCWIYGAYVSDNVTVTPLRNGAAQCRPDAVSKVVPPENRNYITYYQWVVLVLLLESFVFYMPAFLWKIWEGGRLKHLCDDFHKMAVCKDKSRTHLRVLVNYFSSDYKETHFRYFVSYVFCEILNLSISILNFLLLDVFFGGFWGRYRNALLSLYNGDYNQWNIITMAVFPKCAKCEMYKGGPSGSSNIYDYLCLLPLNILNEKIFAFLWIWFILVAMLISLKFLYRLATVLYPGMRLQLLRARARFMPKKHLQVALRNCSFGDWFVLMRVGNNISPELFRKLLEELYEAQSLIKIPPGADKI.

The Cytoplasmic portion of the chain corresponds to 1-21 (MYAAVKPLSKYLQFKSVHIYD). The helical transmembrane segment at 22–42 (AIFTLHSKVTVALLLACTFLL) threads the bilayer. Over 43–110 (SSKQYFGDPI…PENRNYITYY (68 aa)) the chain is Extracellular. A helical transmembrane segment spans residues 111 to 131 (QWVVLVLLLESFVFYMPAFLW). The Cytoplasmic segment spans residues 132–186 (KIWEGGRLKHLCDDFHKMAVCKDKSRTHLRVLVNYFSSDYKETHFRYFVSYVFCE). A helical transmembrane segment spans residues 187–207 (ILNLSISILNFLLLDVFFGGF). The Extracellular portion of the chain corresponds to 208–268 (WGRYRNALLS…LLPLNILNEK (61 aa)). A helical membrane pass occupies residues 269–289 (IFAFLWIWFILVAMLISLKFL). The Cytoplasmic segment spans residues 290–367 (YRLATVLYPG…IKIPPGADKI (78 aa)).

The protein belongs to the pannexin family. In terms of tissue distribution, expressed in nurse cells and oocyte during oogenesis. Uniform expression in imaginal wing disk and low expression in developing imaginal CNS. Expressed in embryonic pole cells and primordial germ cells.

Its subcellular location is the cell membrane. It is found in the cell junction. It localises to the gap junction. Functionally, structural component of the gap junctions in germline cells. Required for differentiation and survival of germline cysts in females and of spermatogonia in males; gap junctional communication between spermatogonia and somatic cyst cells may be required for normal differentiation and survival of spermatogonia. The sequence is that of Innexin inx4 (zpg) from Drosophila melanogaster (Fruit fly).